The sequence spans 514 residues: Protein farnesyltransferase subunit beta (514 aa).

Over residues 1–13 the composition is skewed to basic residues; it reads MRHHTKNLRRRAI. The disordered stretch occupies residues 1–56; that stretch reads MRHHTKNLRRRAIFLRTTPRGNMDSSSSVATSTSSSSNHRLVRSSEGSPSAGGDDI. Residues 25 to 39 are compositionally biased toward low complexity; sequence SSSSVATSTSSSSNH. PFTB repeat units lie at residues 180–221, 231–272, 293–334, 346–388, and 410–454; these read AESL…AVVG, RRAL…SLLN, FTGL…SLLG, IERL…PLIE, and REGL…SSAQ. (2E,6E)-farnesyl diphosphate is bound by residues 319 to 322 and 367 to 370; these read HGAY and RTNK. Asp-373 and Cys-375 together coordinate Zn(2+). Residue 376–379 participates in (2E,6E)-farnesyl diphosphate binding; that stretch reads YSHW. His-442 is a binding site for Zn(2+).

This sequence belongs to the protein prenyltransferase subunit beta family. As to quaternary structure, heterodimer of an alpha and a beta subunit. Interacts with RAS1 and RAS2. Requires Zn(2+) as cofactor. Highly expressed in mycelium, conidium, conidial germination, early formed appressorium and the late infection hypha.

The protein localises to the cytoplasm. It catalyses the reaction L-cysteinyl-[protein] + (2E,6E)-farnesyl diphosphate = S-(2E,6E)-farnesyl-L-cysteinyl-[protein] + diphosphate. Catalyzes the transfer of a farnesyl moiety from farnesyl diphosphate to a cysteine at the fourth position from the C-terminus of several proteins having the C-terminal sequence Cys-aliphatic-aliphatic-X. The beta subunit is responsible for peptide-binding. The chain is Protein farnesyltransferase subunit beta (RAM1) from Pyricularia oryzae (strain 70-15 / ATCC MYA-4617 / FGSC 8958) (Rice blast fungus).